The primary structure comprises 328 residues: Ribosomal protein L11 methyltransferase (328 aa).

The S-adenosyl-L-methionine site is built by Thr-158, Gly-180, Asp-202, and Asn-246.

The protein belongs to the methyltransferase superfamily. PrmA family.

Its subcellular location is the cytoplasm. The catalysed reaction is L-lysyl-[protein] + 3 S-adenosyl-L-methionine = N(6),N(6),N(6)-trimethyl-L-lysyl-[protein] + 3 S-adenosyl-L-homocysteine + 3 H(+). Methylates ribosomal protein L11. The chain is Ribosomal protein L11 methyltransferase from Polynucleobacter necessarius subsp. necessarius (strain STIR1).